Reading from the N-terminus, the 364-residue chain is Very-long-chain (3R)-3-hydroxyacyl-CoA dehydratase 3 (364 aa).

Residues 1 to 151 (MAMENQVLTP…ETLTNLRKGY (151 aa)) are Cytoplasmic-facing. One can recognise a CS domain in the interval 7–96 (VLTPHVYWAQ…KVSQWWERLT (90 aa)). At T9 the chain carries Phosphothreonine. The stretch at 113-138 (LDESDAEMELRAKEEERLNKLRLESE) forms a coiled coil. S116 and S137 each carry phosphoserine. The chain crosses the membrane as a helical span at residues 152–172 (LFMYNLVQFLGFSWIFVNLTV). The Lumenal portion of the chain corresponds to 173 to 191 (RFCILGKESFYDTFHTVAD). A helical transmembrane segment spans residues 192-212 (MMYFCQMLAVVETINAAIGVT). Topologically, residues 213–214 (TS) are cytoplasmic. A helical membrane pass occupies residues 215–235 (PVLPSLIQLLGRNFILFIIFG). The Lumenal segment spans residues 236 to 244 (TMEEMQNKA). Residues 245-265 (VVFFVFYLWSAIEIFRYSFYM) traverse the membrane as a helical segment. Residues 266-282 (LTCIDMDWEVLTWLRYT) are Cytoplasmic-facing. A helical transmembrane segment spans residues 283–303 (LWIPLYPLGCLAEAVSVVQSI). Catalysis depends on residues Y288 and E295. Residues 304-324 (PIFNETGRFSFTLPYPVKIKV) are Lumenal-facing. Residues 325-345 (RFSFFLQIYLIMIFLGLYINF) traverse the membrane as a helical segment. Residues 346–364 (RHLYKQRRRRYGQKKKKIH) lie on the Cytoplasmic side of the membrane.

Belongs to the very long-chain fatty acids dehydratase HACD family. As to quaternary structure, may interact with enzymes of the ELO family (including ELOVL1); with those enzymes that mediate condensation, the first of the four steps of the reaction cycle responsible for fatty acids elongation, may be part of a larger fatty acids elongase complex. Interacts with RAC1.

It is found in the endoplasmic reticulum membrane. It catalyses the reaction a very-long-chain (3R)-3-hydroxyacyl-CoA = a very-long-chain (2E)-enoyl-CoA + H2O. The catalysed reaction is (3R)-hydroxyhexadecanoyl-CoA = (2E)-hexadecenoyl-CoA + H2O. Its pathway is lipid metabolism; fatty acid biosynthesis. Functionally, catalyzes the third of the four reactions of the long-chain fatty acids elongation cycle. This endoplasmic reticulum-bound enzymatic process, allows the addition of two carbons to the chain of long- and very long-chain fatty acids/VLCFAs per cycle. This enzyme catalyzes the dehydration of the 3-hydroxyacyl-CoA intermediate into trans-2,3-enoyl-CoA, within each cycle of fatty acid elongation. Thereby, it participates in the production of VLCFAs of different chain lengths that are involved in multiple biological processes as precursors of membrane lipids and lipid mediators. Involved in Rac1-signaling pathways leading to the modulation of gene expression. In Pongo abelii (Sumatran orangutan), this protein is Very-long-chain (3R)-3-hydroxyacyl-CoA dehydratase 3.